We begin with the raw amino-acid sequence, 92 residues long: Ictacalcin (92 aa).

EF-hand domains follow at residues 12–47 (ISTF…AFGN) and 49–84 (SDQA…TTML). 6 residues coordinate Ca(2+): threonine 27, glutamate 32, aspartate 62, asparagine 64, aspartate 66, and glutamate 73.

Belongs to the S-100 family. In terms of tissue distribution, abundant in epithelial cells of olfactory rosette, barbel, skin and gill but not brain or muscle.

Plays an important role in catfish calcium homeostasis. The sequence is that of Ictacalcin from Ictalurus punctatus (Channel catfish).